Here is a 292-residue protein sequence, read N- to C-terminus: Diaminopimelate epimerase (292 aa).

Positions 14 and 78 each coordinate substrate. Residue Cys-87 is the Proton donor of the active site. Residues 88–89 (GN), Asn-164, Asn-197, and 221–222 (ER) each bind substrate. The active-site Proton acceptor is the Cys-230. 231–232 (GT) serves as a coordination point for substrate.

The protein belongs to the diaminopimelate epimerase family. In terms of assembly, homodimer.

The protein localises to the cytoplasm. The catalysed reaction is (2S,6S)-2,6-diaminopimelate = meso-2,6-diaminopimelate. Its pathway is amino-acid biosynthesis; L-lysine biosynthesis via DAP pathway; DL-2,6-diaminopimelate from LL-2,6-diaminopimelate: step 1/1. Catalyzes the stereoinversion of LL-2,6-diaminopimelate (L,L-DAP) to meso-diaminopimelate (meso-DAP), a precursor of L-lysine and an essential component of the bacterial peptidoglycan. This is Diaminopimelate epimerase from Leifsonia xyli subsp. xyli (strain CTCB07).